Consider the following 248-residue polypeptide: 5'-nucleotidase SurE (248 aa).

A divalent metal cation is bound by residues aspartate 8, aspartate 9, serine 39, and asparagine 91.

This sequence belongs to the SurE nucleotidase family. A divalent metal cation serves as cofactor.

It localises to the cytoplasm. The enzyme catalyses a ribonucleoside 5'-phosphate + H2O = a ribonucleoside + phosphate. In terms of biological role, nucleotidase that shows phosphatase activity on nucleoside 5'-monophosphates. The protein is 5'-nucleotidase SurE of Geotalea daltonii (strain DSM 22248 / JCM 15807 / FRC-32) (Geobacter daltonii).